The primary structure comprises 319 residues: Proline hydroxylase buaE (319 aa).

One can recognise a Fe2OG dioxygenase domain in the interval 168 to 280 (NSSELRLNHY…RYSIAYFGKP (113 aa)). Fe cation contacts are provided by His-195, Asp-197, and His-255. Residue Arg-271 participates in 2-oxoglutarate binding.

The protein belongs to the iron/ascorbate-dependent oxidoreductase family. Fe(2+) is required as a cofactor.

Its pathway is mycotoxin biosynthesis. In terms of biological role, proline hydroxylase; part of the gene cluster that mediates the biosynthesis of burnettramic acids, an unusual class of bolaamphiphilic pyrrolizidinediones that display potent antibacterial, antifungal, and cytotoxic activities. The first step of the biosynthesis of burnettramic acids is the hydroxylation of proline by the proline hydroxylase buaE to generate 4-hydroxyproline. The PKS-NRPS buaA and trans-enoyl reductase buaC construct the highly reduced polyketide chain, and the condensation (C) domain of buaA then catalyzes the amide bond formation with the activated 4-hydroxyproline. This is followed by the R domain releasing the nascent polyketide-peptide directly via a Dieckmann condensation to afford a tetramic acid fused to the hydroxyproline, generating the bicyclic pyrrolidinedione moiety. The cytochrome P450 monooxygenases buaD and buaG are likely responsible for the multiple hydroxylations on the polyketide chain and its terminus, although in the heterologous context, buaD does not appear to be required. Therefore, while buaG may be a multifunctional cytochrome P450 monooxygenase, it cannot be ruled out that the two secondary alcohols on the polyketide chain could have an acetate origin. Finally, the glycosyltransferase buaB transfers beta-D-mannose to the aglycone burnettramic acid A to form burnettramic acid A. Burnettramic acid B is a minor cis-pyrrolizidine epimer of burnettramic acid A and it is likely that small amounts of it form naturally in acidic environments. The polypeptide is Proline hydroxylase buaE (Petromyces alliaceus (Aspergillus alliaceus)).